Consider the following 119-residue polypeptide: 5-hydroxyisourate hydrolase (119 aa).

Histidine 10, arginine 48, and tyrosine 116 together coordinate substrate.

It belongs to the transthyretin family. 5-hydroxyisourate hydrolase subfamily. Homotetramer.

The catalysed reaction is 5-hydroxyisourate + H2O = 5-hydroxy-2-oxo-4-ureido-2,5-dihydro-1H-imidazole-5-carboxylate + H(+). It functions in the pathway purine metabolism; urate degradation; (S)-allantoin from urate: step 2/3. Catalyzes the hydrolysis of 5-hydroxyisourate (HIU) to 2-oxo-4-hydroxy-4-carboxy-5-ureidoimidazoline (OHCU). This Deinococcus radiodurans (strain ATCC 13939 / DSM 20539 / JCM 16871 / CCUG 27074 / LMG 4051 / NBRC 15346 / NCIMB 9279 / VKM B-1422 / R1) protein is 5-hydroxyisourate hydrolase.